We begin with the raw amino-acid sequence, 271 residues long: ATP synthase subunit a (271 aa).

A run of 5 helical transmembrane segments spans residues 38–58, 100–120, 146–166, 220–240, and 242–262; these read FWTL…LFLL, LIAP…LMDL, DVNI…FYSI, LIFI…LNVP, and AIFH…LTIV.

This sequence belongs to the ATPase A chain family. In terms of assembly, F-type ATPases have 2 components, CF(1) - the catalytic core - and CF(0) - the membrane proton channel. CF(1) has five subunits: alpha(3), beta(3), gamma(1), delta(1), epsilon(1). CF(0) has three main subunits: a(1), b(2) and c(9-12). The alpha and beta chains form an alternating ring which encloses part of the gamma chain. CF(1) is attached to CF(0) by a central stalk formed by the gamma and epsilon chains, while a peripheral stalk is formed by the delta and b chains.

It localises to the cell inner membrane. Its function is as follows. Key component of the proton channel; it plays a direct role in the translocation of protons across the membrane. The sequence is that of ATP synthase subunit a from Citrobacter koseri (strain ATCC BAA-895 / CDC 4225-83 / SGSC4696).